Consider the following 579-residue polypeptide: Keratinocyte proline-rich protein (579 aa).

Serine 394 bears the Phosphoserine mark. The tract at residues 526 to 579 is disordered; the sequence is EAPYCGPSSYNQGQESGAGCGPGDVFPERRGQDGHGDQGNAFAGVKGEAKSAYF. Basic and acidic residues predominate over residues 551–561; it reads FPERRGQDGHG.

As to expression, expressed in the upper layer of epidermis and psoriasis (at protein level). Expressed in the upper layer of epidermis and psoriasis.

It localises to the cytoplasm. The sequence is that of Keratinocyte proline-rich protein (KPRP) from Homo sapiens (Human).